We begin with the raw amino-acid sequence, 177 residues long: Ribosome rescue factor SmrB (177 aa).

Residues 92–167 (LDLHGLTRQK…GDAAILVLIE (76 aa)) form the Smr domain.

The protein belongs to the SmrB family. As to quaternary structure, associates with collided ribosomes, but not with correctly translating polysomes.

Its function is as follows. Acts as a ribosome collision sensor. Detects stalled/collided disomes (pairs of ribosomes where the leading ribosome is stalled and a second ribosome has collided with it) and endonucleolytically cleaves mRNA at the 5' boundary of the stalled ribosome. Stalled/collided disomes form a new interface (primarily via the 30S subunits) that binds SmrB. Cleaved mRNA becomes available for tmRNA ligation, leading to ribosomal subunit dissociation and rescue of stalled ribosomes. The sequence is that of Ribosome rescue factor SmrB from Haemophilus ducreyi (strain 35000HP / ATCC 700724).